The sequence spans 298 residues: MYHVPVLLKESVEGLNINPEGIYVDVTFGGGGHSREILKHLKGGKLYAFDQDADAVDNAKDLIGPNFTLIPANFRYIKKYLRLNGVDKVDGLLGDLGISSHQIDTPERGFSIRYDAPLDMRMDRAIDKTAADIINKYSEHGLHSILGMYGEVRNAKTLAQALVKERINKPINRTSELIEVLSDYAPRGKESKYYAQVFQALRIEVNEELEALKDLLEQSQQVLKSGGRLSIISYHSLEDRLVKNFVQQGKFHGDAEKDLYGNTNKPFKSVGKAIDPDDEEKERNNRARSARLRIAERE.

S-adenosyl-L-methionine-binding positions include 31 to 33 (GGH), aspartate 50, tyrosine 80, aspartate 95, and glutamine 102. The interval 255–298 (AEKDLYGNTNKPFKSVGKAIDPDDEEKERNNRARSARLRIAERE) is disordered.

Belongs to the methyltransferase superfamily. RsmH family.

It localises to the cytoplasm. It carries out the reaction cytidine(1402) in 16S rRNA + S-adenosyl-L-methionine = N(4)-methylcytidine(1402) in 16S rRNA + S-adenosyl-L-homocysteine + H(+). Its function is as follows. Specifically methylates the N4 position of cytidine in position 1402 (C1402) of 16S rRNA. The chain is Ribosomal RNA small subunit methyltransferase H from Cytophaga hutchinsonii (strain ATCC 33406 / DSM 1761 / CIP 103989 / NBRC 15051 / NCIMB 9469 / D465).